The primary structure comprises 422 residues: Mannosylglycerate synthase (422 aa).

GDP-alpha-D-mannose contacts are provided by residues 7 to 11 (PFKEE), glutamine 66, lysine 77, aspartate 101, and 101 to 102 (DS). Residues arginine 132 and 137–140 (AMIT) contribute to the (R)-glycerate site. 3 residues coordinate GDP-alpha-D-mannose: leucine 164, aspartate 193, and tyrosine 221.

The protein belongs to the glycosyltransferase 78 family.

The enzyme catalyses (R)-glycerate + GDP-alpha-D-mannose = (2R)-2-O-(alpha-D-mannosyl)-glycerate + GDP + H(+). It catalyses the reaction GDP-alpha-D-glucose + (R)-glycerate = (2R)-2-O-(alpha-D-glucopyranosyl)-glycerate + GDP + H(+). With respect to regulation, activity is not dependent on divalent cations, but it is enhanced by Mg(2+). Involved in the biosynthesis of the compatible solute alpha-D-mannosyl-glycerate (MG). Catalyzes the condensation of GDP-alpha-D-mannose (GDP-Man) with D-glycerate to produce alpha-D-mannosyl-glycerate. Can also use GDP-alpha-D-glucose (GDP-Glc) as sugar donor to produce alpha-D-glucopyranosyl-glycerate (GG). In Selaginella moellendorffii (Spikemoss), this protein is Mannosylglycerate synthase.